The primary structure comprises 160 residues: Putative UPF0479 protein YNL339W-B (160 aa).

Transmembrane regions (helical) follow at residues Ile-39 to Gln-59 and Val-136 to His-156.

The protein belongs to the UPF0479 family.

The protein localises to the membrane. This chain is Putative UPF0479 protein YNL339W-B, found in Saccharomyces cerevisiae (strain ATCC 204508 / S288c) (Baker's yeast).